The chain runs to 505 residues: Cytochrome P450 9b1 (505 aa).

Heme is bound at residue Cys-449.

The protein belongs to the cytochrome P450 family. The cofactor is heme.

The protein resides in the endoplasmic reticulum membrane. Its subcellular location is the microsome membrane. In terms of biological role, may be involved in the metabolism of insect hormones and in the breakdown of synthetic insecticides. In Drosophila melanogaster (Fruit fly), this protein is Cytochrome P450 9b1 (Cyp9b1).